The chain runs to 432 residues: Endosome-associated-trafficking regulator 1 (432 aa).

Ser18 is modified (phosphoserine). Residues 126–143 are compositionally biased toward basic and acidic residues; that stretch reads DTTTSRIYPKEASRHPLG. Residues 126-145 form a disordered region; sequence DTTTSRIYPKEASRHPLGLE. The residue at position 148 (Ser148) is a Phosphoserine. Residues 174–196 form a required for interaction with PTPN13 region; it reads LEEDEDDGWNITYLPSAVDQTHS. The segment at 226 to 250 is disordered; the sequence is PPWTLSDTDSRISPASPAGSPNADF. Residues Ser241 and Ser245 each carry the phosphoserine modification. Coiled coils occupy residues 262 to 289 and 315 to 370; these read LRTL…VQSF and FHDL…LRSG.

The protein belongs to the ENTR1 family. Found in a complex with ENTR1, PTPN13 and GIT1. Interacts with PTPN13 (via the FERM domain). Interacts (via N-terminus) with GIT1 (via N- and C-terminus); this interaction is direct. Interacts with NOD2. Interacts (via N-terminus) with IFT88. Interacts with VPS35. Phosphorylated.

It is found in the cytoplasm. The protein localises to the early endosome. The protein resides in the endosome. It localises to the recycling endosome. Its subcellular location is the midbody. It is found in the cytoskeleton. The protein localises to the microtubule organizing center. The protein resides in the centrosome. It localises to the cilium basal body. May be involved in modulation of TNF response. May be involved in presentation of TNFRSF1A on the cell surface. Involved in the endosome-to-plasma membrane trafficking and recycling of SNX27-retromer-dependent cargo proteins, such as GLUT1. Involved in the regulation of cytokinesis; the function may involve PTPN13 and GIT1. In terms of biological role, endosome-associated protein that plays a role in membrane receptor sorting, cytokinesis and ciliogenesis. Involved in the endosome-to-plasma membrane trafficking and recycling of SNX27-retromer-dependent cargo proteins, such as GLUT1. Involved in the regulation of cytokinesis; the function may involve PTPN13 and GIT1. Plays a role in the formation of cilia. Involved in cargo protein localization, such as PKD2, at primary cilia. Involved in the presentation of the tumor necrosis factor (TNF) receptor TNFRSF1A on the cell surface, and hence in the modulation of the TNF-induced apoptosis. The polypeptide is Endosome-associated-trafficking regulator 1 (Mus musculus (Mouse)).